A 267-amino-acid chain; its full sequence is Acyl-[acyl-carrier-protein]--UDP-N-acetylglucosamine O-acyltransferase (267 aa).

This sequence belongs to the transferase hexapeptide repeat family. LpxA subfamily. Homotrimer.

The protein resides in the cytoplasm. The catalysed reaction is a (3R)-hydroxyacyl-[ACP] + UDP-N-acetyl-alpha-D-glucosamine = a UDP-3-O-[(3R)-3-hydroxyacyl]-N-acetyl-alpha-D-glucosamine + holo-[ACP]. Its pathway is glycolipid biosynthesis; lipid IV(A) biosynthesis; lipid IV(A) from (3R)-3-hydroxytetradecanoyl-[acyl-carrier-protein] and UDP-N-acetyl-alpha-D-glucosamine: step 1/6. Involved in the biosynthesis of lipid A, a phosphorylated glycolipid that anchors the lipopolysaccharide to the outer membrane of the cell. The sequence is that of Acyl-[acyl-carrier-protein]--UDP-N-acetylglucosamine O-acyltransferase from Cupriavidus taiwanensis (strain DSM 17343 / BCRC 17206 / CCUG 44338 / CIP 107171 / LMG 19424 / R1) (Ralstonia taiwanensis (strain LMG 19424)).